The primary structure comprises 382 residues: Dual-specificity RNA methyltransferase RlmN (382 aa).

Catalysis depends on Glu-94, which acts as the Proton acceptor. The region spanning 100–336 (EANRGTLCVS…NTITRKTRGD (237 aa)) is the Radical SAM core domain. An intrachain disulfide couples Cys-107 to Cys-342. 3 residues coordinate [4Fe-4S] cluster: Cys-114, Cys-118, and Cys-121. Residues 168-169 (GE), Ser-200, 222-224 (SLH), and Asn-299 each bind S-adenosyl-L-methionine. The active-site S-methylcysteine intermediate is the Cys-342.

The protein belongs to the radical SAM superfamily. RlmN family. The cofactor is [4Fe-4S] cluster.

Its subcellular location is the cytoplasm. The enzyme catalyses adenosine(2503) in 23S rRNA + 2 reduced [2Fe-2S]-[ferredoxin] + 2 S-adenosyl-L-methionine = 2-methyladenosine(2503) in 23S rRNA + 5'-deoxyadenosine + L-methionine + 2 oxidized [2Fe-2S]-[ferredoxin] + S-adenosyl-L-homocysteine. The catalysed reaction is adenosine(37) in tRNA + 2 reduced [2Fe-2S]-[ferredoxin] + 2 S-adenosyl-L-methionine = 2-methyladenosine(37) in tRNA + 5'-deoxyadenosine + L-methionine + 2 oxidized [2Fe-2S]-[ferredoxin] + S-adenosyl-L-homocysteine. In terms of biological role, specifically methylates position 2 of adenine 2503 in 23S rRNA and position 2 of adenine 37 in tRNAs. m2A2503 modification seems to play a crucial role in the proofreading step occurring at the peptidyl transferase center and thus would serve to optimize ribosomal fidelity. The polypeptide is Dual-specificity RNA methyltransferase RlmN (Legionella pneumophila subsp. pneumophila (strain Philadelphia 1 / ATCC 33152 / DSM 7513)).